Here is a 446-residue protein sequence, read N- to C-terminus: Tubulin beta-2 chain (446 aa).

8 residues coordinate GTP: Gln-11, Glu-69, Ser-138, Gly-142, Thr-143, Gly-144, Asn-204, and Asn-226. Glu-69 is a binding site for Mg(2+).

The protein belongs to the tubulin family. Dimer of alpha and beta chains. A typical microtubule is a hollow water-filled tube with an outer diameter of 25 nm and an inner diameter of 15 nM. Alpha-beta heterodimers associate head-to-tail to form protofilaments running lengthwise along the microtubule wall with the beta-tubulin subunit facing the microtubule plus end conferring a structural polarity. Microtubules usually have 13 protofilaments but different protofilament numbers can be found in some organisms and specialized cells. Mg(2+) serves as cofactor.

It is found in the cytoplasm. Its subcellular location is the cytoskeleton. Tubulin is the major constituent of microtubules, a cylinder consisting of laterally associated linear protofilaments composed of alpha- and beta-tubulin heterodimers. Microtubules grow by the addition of GTP-tubulin dimers to the microtubule end, where a stabilizing cap forms. Below the cap, tubulin dimers are in GDP-bound state, owing to GTPase activity of alpha-tubulin. In Hypocrea rufa (Trichoderma viride), this protein is Tubulin beta-2 chain (tub2).